A 151-amino-acid polypeptide reads, in one-letter code: UPF0208 membrane protein Spro_3315 (151 aa).

The next 2 membrane-spanning stretches (helical) occupy residues 46 to 64 (FAVR…WQIA) and 70 to 90 (GPAI…LWWL).

This sequence belongs to the UPF0208 family.

It localises to the cell inner membrane. This Serratia proteamaculans (strain 568) protein is UPF0208 membrane protein Spro_3315.